The chain runs to 229 residues: Endonuclease V (229 aa).

The protein belongs to the endonuclease V family.

The protein resides in the cytoplasm. The catalysed reaction is Endonucleolytic cleavage at apurinic or apyrimidinic sites to products with a 5'-phosphate.. DNA repair enzyme involved in the repair of deaminated bases. Selectively cleaves double-stranded DNA at the second phosphodiester bond 3' to a deoxyinosine leaving behind the intact lesion on the nicked DNA. The chain is Endonuclease V from Methanopyrus kandleri (strain AV19 / DSM 6324 / JCM 9639 / NBRC 100938).